We begin with the raw amino-acid sequence, 364 residues long: tRNA 2-selenouridine synthase (364 aa).

The Rhodanese domain occupies 14-137; it reads LIADTPIIDV…LRQTAIQATI (124 aa). Catalysis depends on cysteine 97, which acts as the S-selanylcysteine intermediate.

The protein belongs to the SelU family. As to quaternary structure, monomer.

The enzyme catalyses 5-methylaminomethyl-2-thiouridine(34) in tRNA + selenophosphate + (2E)-geranyl diphosphate + H2O + H(+) = 5-methylaminomethyl-2-selenouridine(34) in tRNA + (2E)-thiogeraniol + phosphate + diphosphate. It carries out the reaction 5-methylaminomethyl-2-thiouridine(34) in tRNA + (2E)-geranyl diphosphate = 5-methylaminomethyl-S-(2E)-geranyl-thiouridine(34) in tRNA + diphosphate. It catalyses the reaction 5-methylaminomethyl-S-(2E)-geranyl-thiouridine(34) in tRNA + selenophosphate + H(+) = 5-methylaminomethyl-2-(Se-phospho)selenouridine(34) in tRNA + (2E)-thiogeraniol. The catalysed reaction is 5-methylaminomethyl-2-(Se-phospho)selenouridine(34) in tRNA + H2O = 5-methylaminomethyl-2-selenouridine(34) in tRNA + phosphate. Its function is as follows. Involved in the post-transcriptional modification of the uridine at the wobble position (U34) of tRNA(Lys), tRNA(Glu) and tRNA(Gln). Catalyzes the conversion of 2-thiouridine (S2U-RNA) to 2-selenouridine (Se2U-RNA). Acts in a two-step process involving geranylation of 2-thiouridine (S2U) to S-geranyl-2-thiouridine (geS2U) and subsequent selenation of the latter derivative to 2-selenouridine (Se2U) in the tRNA chain. The protein is tRNA 2-selenouridine synthase of Escherichia coli (strain ATCC 8739 / DSM 1576 / NBRC 3972 / NCIMB 8545 / WDCM 00012 / Crooks).